The following is a 593-amino-acid chain: Aspartate--tRNA ligase (593 aa).

E180 lines the L-aspartate pocket. The interval 204–207 (QIFK) is aspartate. R226 serves as a coordination point for L-aspartate. ATP is bound by residues 226 to 228 (RDE) and Q235. H453 provides a ligand contact to L-aspartate. E487 contacts ATP. R494 is an L-aspartate binding site. Residue 539-542 (GLDR) coordinates ATP.

Belongs to the class-II aminoacyl-tRNA synthetase family. Type 1 subfamily. As to quaternary structure, homodimer.

It is found in the cytoplasm. It carries out the reaction tRNA(Asp) + L-aspartate + ATP = L-aspartyl-tRNA(Asp) + AMP + diphosphate. Catalyzes the attachment of L-aspartate to tRNA(Asp) in a two-step reaction: L-aspartate is first activated by ATP to form Asp-AMP and then transferred to the acceptor end of tRNA(Asp). The protein is Aspartate--tRNA ligase of Clostridium botulinum (strain ATCC 19397 / Type A).